The following is a 334-amino-acid chain: D-alanine--D-alanine ligase (334 aa).

The region spanning 110–306 (KHVLKSLGID…FDHVVDLIVQ (197 aa)) is the ATP-grasp domain. Residue 138–190 (LPYPFVIKPVRGGSTIGVHAIFSKSEYLDLSAHADTLEDRMIVEEYVSGQEVQ) coordinates ATP. Mg(2+)-binding residues include Asp-258, Glu-272, and Asn-274.

It belongs to the D-alanine--D-alanine ligase family. Mg(2+) is required as a cofactor. The cofactor is Mn(2+).

The protein resides in the cytoplasm. It carries out the reaction 2 D-alanine + ATP = D-alanyl-D-alanine + ADP + phosphate + H(+). It functions in the pathway cell wall biogenesis; peptidoglycan biosynthesis. Cell wall formation. The sequence is that of D-alanine--D-alanine ligase from Anaplasma marginale (strain Florida).